The chain runs to 103 residues: Small ribosomal subunit protein uS10 (103 aa).

It belongs to the universal ribosomal protein uS10 family. In terms of assembly, part of the 30S ribosomal subunit.

Its function is as follows. Involved in the binding of tRNA to the ribosomes. In Jannaschia sp. (strain CCS1), this protein is Small ribosomal subunit protein uS10.